We begin with the raw amino-acid sequence, 609 residues long: MVELAAATCLHECGLPQAWCKQEAWRILETRFGQGLHFLTTWQAWRNDPQRPRMLHYVAVTAAPPDIDELLAGMASSPELLLLAKELAPQCLGLSTGFQRLTFDGGHVLLTLCVGDLTAMLRAQQFAADSIYLTPDPTDCPDRCAASNWRVWTAKALARCCRRGTTLVAPVDADHLYADLTQCGFELSTIQAGQPTGPEAAPTNISLRAQFNPRWTIKNTRNTLPARAMAVSSCAVIGAGLAGASVAASLARRGWQVQVLDQAHTPAAGASGLPVGLVVPHVSADDCVLSRLSRSGVRLMLQQARSLLRQGQDWDATGVLERRLDGPPGVPDIWHPQAAWLKPTQLVRAWLAQLGITFQGDAKVAALRQRGDEWELLDTDGGMLHRASRVVFANAGGAMALLDTLQARLPALNIRVNQFPVMQGVRGQVSWAMHTGLPDETFPPFPINGAGSIVPWVPVDEDCGQNLAWFVGASYQPDSQPPAPDEKNHATNLARLHKLSPKLGQALAGKFAAGAVNAWKNTRCVTADRLPAVGPLDQVDHPGLWMCAGMGSRGLSFSMLCAELLAARWSGEPLPIDAGLARTLEARRGADCHRNRLDRSPELPVSCAP.

A tRNA (mnm(5)s(2)U34)-methyltransferase region spans residues 1–229 (MVELAAATCL…TRNTLPARAM (229 aa)). An FAD-dependent cmnm(5)s(2)U34 oxidoreductase region spans residues 237–609 (IGAGLAGASV…SPELPVSCAP (373 aa)).

It in the N-terminal section; belongs to the methyltransferase superfamily. tRNA (mnm(5)s(2)U34)-methyltransferase family. The protein in the C-terminal section; belongs to the DAO family. FAD serves as cofactor.

It localises to the cytoplasm. The catalysed reaction is 5-aminomethyl-2-thiouridine(34) in tRNA + S-adenosyl-L-methionine = 5-methylaminomethyl-2-thiouridine(34) in tRNA + S-adenosyl-L-homocysteine + H(+). Functionally, catalyzes the last two steps in the biosynthesis of 5-methylaminomethyl-2-thiouridine (mnm(5)s(2)U) at the wobble position (U34) in tRNA. Catalyzes the FAD-dependent demodification of cmnm(5)s(2)U34 to nm(5)s(2)U34, followed by the transfer of a methyl group from S-adenosyl-L-methionine to nm(5)s(2)U34, to form mnm(5)s(2)U34. The sequence is that of tRNA 5-methylaminomethyl-2-thiouridine biosynthesis bifunctional protein MnmC (mnmC) from Albidiferax ferrireducens (strain ATCC BAA-621 / DSM 15236 / T118) (Rhodoferax ferrireducens).